We begin with the raw amino-acid sequence, 1368 residues long: Inactive tyrosine-protein kinase PRAG1 (1368 aa).

The tract at residues 200 to 236 (CLKGPRPCTSPQPLRESLPSEDDSDQRCSPSGDSEGG) is disordered. Y238 bears the Phosphotyrosine; by CSK mark. The tract at residues 297 to 330 (STANPPHLGPKKPSLNSEAASSSDGLSCGSSRSG) is disordered. The segment covering 317–330 (SSSDGLSCGSSRSG) has biased composition (low complexity). Y343 and Y391 each carry phosphotyrosine; by CSK. Disordered regions lie at residues 392 to 443 (AESA…PNAA), 499 to 605 (LSSR…GAWS), and 636 to 792 (HSNS…KKIV). The segment covering 414-434 (VSSGQVWTGDTWSQKTPSGWS) has biased composition (polar residues). Residues 502–518 (RESHPHNMTENSSKEKP) are compositionally biased toward basic and acidic residues. Low complexity-rich tracts occupy residues 522 to 535 (PKLSKSSPGGSPVS) and 550 to 563 (SGSSVGSQPSSRVP). 2 stretches are compositionally biased toward polar residues: residues 564–574 (TNLTSSCQTNG) and 652–666 (SGQNGKTNSGMSKSA). Residues S667 and S716 each carry the phosphoserine modification. 2 stretches are compositionally biased toward polar residues: residues 707-717 (VSQSSAESLSP) and 725-741 (SFTTGSTDSLASDSRTC). Residues S753 and S797 each carry the phosphoserine modification. 2 disordered regions span residues 799-818 (PDGFFWTQGSPKPRTASPKL) and 873-901 (NSKGGCGSPNLQGRAATSTSSSQLSVSSQ). Low complexity predominate over residues 887 to 901 (AATSTSSSQLSVSSQ). The interval 906 to 949 (SSQLQLHSLLSSISSKEGTYAKLGGLYTQSLARLVTKCEDLFMG) is required for homodimerization. The Protein kinase domain maps to 940 to 1291 (VTKCEDLFMG…EAKRVLQCLL (352 aa)). The segment covering 1134-1144 (SSPGPSANPSV) has biased composition (polar residues). A disordered region spans residues 1134–1166 (SSPGPSANPSVPTTTSRCPSAAPAATTACQGGP). Over residues 1145-1162 (PTTTSRCPSAAPAATTAC) the composition is skewed to low complexity. The interval 1293 to 1368 (GPRRELVEQP…LQSLKLLQLL (76 aa)) is required for homodimerization.

The protein belongs to the protein kinase superfamily. As to quaternary structure, homodimer. Dimerization leads to the catalytic activation of CSK. Interacts (via C-terminus) with RND2. Interacts with CSK (via SH2 domain) in a Tyr-391 phosphorylation-dependent manner; this interaction potentiates kinase activity of CSK. Interacts with NOTCH1 intracellular domain (N1ICD). Forms a complex with N1ICD and MAML1, in a MAML1-dependent manner. Post-translationally, phosphorylated by CSK on Tyr-238, Tyr-343, and Tyr-391; Tyr-391 is a primary site of phosphorylation. Highly-expressed in brain, including cortical and hippocampal pyramidal neurons, as well as in kidney, spleen, colon and small intestine.

It localises to the cytoplasm. The protein localises to the nucleus. The protein resides in the cell junction. It is found in the focal adhesion. In terms of biological role, catalytically inactive protein kinase that acts as a scaffold protein. Functions as an effector of the small GTPase RND2, which stimulates RhoA activity and inhibits NGF-induced neurite outgrowth. Promotes Src family kinase (SFK) signallig by regulating the subcellular localization of CSK, a negative regulator of these kinases, leading to the regulation of cell morphology and motility by a CSK-dependent mechanism. Acts as a critical coactivator of Notch signaling. This is Inactive tyrosine-protein kinase PRAG1 from Rattus norvegicus (Rat).